We begin with the raw amino-acid sequence, 83 residues long: U5-theraphotoxin-Hs1a 1 (83 aa).

A signal peptide spans 1-21; that stretch reads MKTSMFLTLTGLGLLFVVCYA. The propeptide occupies 22–49; that stretch reads SESEEKEFPKELLSSIFAADSDFKVEER. 3 cysteine pairs are disulfide-bonded: cysteine 51-cysteine 63, cysteine 56-cysteine 68, and cysteine 62-cysteine 75.

The protein belongs to the neurotoxin 10 (Hwtx-1) family. 51 (Hntx-8) subfamily. Hntx-8 sub-subfamily. As to expression, expressed by the venom gland.

Its subcellular location is the secreted. Functionally, agglutinates human and mice erythrocytes. This activity can be specifically inhibited by mannosamine. This lectin shows very low toxicity in both mammals and insects. The chain is U5-theraphotoxin-Hs1a 1 from Cyriopagopus schmidti (Chinese bird spider).